A 126-amino-acid polypeptide reads, in one-letter code: C-type natriuretic peptide (126 aa).

Positions 1–23 (MHLSQLIACALLLALLSLRPSEA) are cleaved as a signal peptide. Residues 20-73 (PSEAKPGTPPKVPRTPPGEELADSQAAGGNQKKGDKTPGSGGANLKGDRSRLLR) are disordered. The propeptide occupies 24-73 (KPGTPPKVPRTPPGEELADSQAAGGNQKKGDKTPGSGGANLKGDRSRLLR). Residues 26 to 35 (GTPPKVPRTP) show a composition bias toward pro residues. A disulfide bridge links C110 with C126.

It belongs to the natriuretic peptide family. Post-translationally, degraded by IDE (in vitro).

The protein localises to the secreted. In terms of biological role, hormone which plays a role in endochondral ossification through regulation of cartilaginous growth plate chondrocytes proliferation and differentiation. May also be vasoactive and natriuretic. Acts by specifically binding and stimulating NPR2 to produce cGMP. Binds the clearance receptor NPR3. The polypeptide is C-type natriuretic peptide (Nppc) (Mus musculus (Mouse)).